Here is a 131-residue protein sequence, read N- to C-terminus: MNLYEIMLEHFAPKGSERGIFTYLLAQSDEEVYEWLKTDPSLSDGRAVYTPYQDNEANGKTYAIYNQSFDIVGHEKYKDRMIRLKGELNDEVELTDLYYGMTLVGWSMVKSDIPSEQIELLKDTGISIESA.

This chain is SPbeta prophage-derived uncharacterized protein YoqY (yoqY), found in Bacillus subtilis (strain 168).